The following is a 193-amino-acid chain: uncharacterized protein (193 aa).

This is an uncharacterized protein from Archaeoglobus fulgidus (strain ATCC 49558 / DSM 4304 / JCM 9628 / NBRC 100126 / VC-16).